The following is a 122-amino-acid chain: Cofilin-5 (122 aa).

Residues 3–122 (SRIIEIDPNC…VKDLIQLSNL (120 aa)) form the ADF-H domain.

Belongs to the actin-binding proteins ADF family.

It localises to the cytoplasm. The protein localises to the cytoskeleton. Controls actin polymerization and depolymerization. The sequence is that of Cofilin-5 (cofF) from Dictyostelium discoideum (Social amoeba).